Reading from the N-terminus, the 973-residue chain is Leucine--tRNA ligase, chloroplastic/mitochondrial (973 aa).

A 'HIGH' region motif is present at residues 126–135 (PSGAGLHVGH). The 'KMSKS' region signature appears at 730 to 734 (KMSKS). K733 contributes to the ATP binding site.

Belongs to the class-I aminoacyl-tRNA synthetase family.

It is found in the plastid. Its subcellular location is the chloroplast. The protein localises to the mitochondrion. The enzyme catalyses tRNA(Leu) + L-leucine + ATP = L-leucyl-tRNA(Leu) + AMP + diphosphate. Functionally, catalyzes the specific attachment of an amino acid to its cognate tRNA in a two step reaction: the amino acid (AA) is first activated by ATP to form AA-AMP and then transferred to the acceptor end of the tRNA. This is Leucine--tRNA ligase, chloroplastic/mitochondrial from Arabidopsis thaliana (Mouse-ear cress).